Reading from the N-terminus, the 217-residue chain is Somatotropin (217 aa).

The signal sequence occupies residues methionine 1–glycine 26. Histidine 46 is a binding site for Zn(2+). Residues cysteine 79 and cysteine 190 are joined by a disulfide bond. Serine 132 carries the post-translational modification Phosphoserine. Position 199 (glutamate 199) interacts with Zn(2+). A disulfide bond links cysteine 207 and cysteine 215.

The protein belongs to the somatotropin/prolactin family.

Its subcellular location is the secreted. Plays an important role in growth control. Its major role in stimulating body growth is to stimulate the liver and other tissues to secrete IGF1. It stimulates both the differentiation and proliferation of myoblasts. It also stimulates amino acid uptake and protein synthesis in muscle and other tissues. The chain is Somatotropin (GH1) from Bos mutus grunniens (Wild yak).